Here is a 250-residue protein sequence, read N- to C-terminus: V-type proton ATPase subunit D (250 aa).

This sequence belongs to the V-ATPase D subunit family. V-ATPase is a heteromultimeric enzyme made up of two complexes: the ATP-hydrolytic V1 complex and the proton translocation V0 complex. The V1 complex consists of three catalytic AB heterodimers that form a heterohexamer, three peripheral stalks each consisting of EG heterodimers, one central rotor including subunits D and F, and the regulatory subunits C and H. The proton translocation complex V0 consists of the proton transport subunit a, a ring of proteolipid subunits c9c'', rotary subunit d, subunits e and f, and two accessory subunits ATP6AP1/Ac45 and ATP6AP2/PRR.

Subunit of the V1 complex of vacuolar(H+)-ATPase (V-ATPase), a multisubunit enzyme composed of a peripheral complex (V1) that hydrolyzes ATP and a membrane integral complex (V0) that translocates protons. V-ATPase is responsible for acidifying and maintaining the pH of intracellular compartments and in some cell types, is targeted to the plasma membrane, where it is responsible for acidifying the extracellular environment. This Suberites domuncula (Sponge) protein is V-type proton ATPase subunit D (VATPD).